Reading from the N-terminus, the 244-residue chain is Anti-H(O) lectin 1 (244 aa).

2 N-linked (GlcNAc...) asparagine glycosylation sites follow: Asn-113 and Asn-117. Mn(2+) is bound by residues Glu-127 and Asp-129. Residues Asp-129, Tyr-131, Asn-137, and Asp-142 each contribute to the Ca(2+) site. Mn(2+) is bound by residues Asp-142 and His-145.

This sequence belongs to the leguminous lectin family. In terms of assembly, homotetramer.

Functionally, di-N-acetylchitobiose-binding anti-H(O) lectin. This Cytisophyllum sessilifolium (Sessile-leaved cytisus) protein is Anti-H(O) lectin 1.